The chain runs to 780 residues: Pendrin (780 aa).

The Cytoplasmic segment spans residues 1–87 (MAARDRRSEP…YRVKEWLLSD (87 aa)). Residues 88-108 (IISGVSTGLVGTLQGMAYALL) traverse the membrane as a helical segment. Residue alanine 109 is a topological domain, extracellular. A helical membrane pass occupies residues 110–130 (AVPVQYGLYSAFFPILTYFVF). The Cytoplasmic segment spans residues 131 to 135 (GTSRH). The helical transmembrane segment at 136–156 (ISVGPFPVVSLMVGSVVLSMA) threads the bilayer. The Extracellular segment spans residues 157–191 (PDDHFLVPSGNGSTLNTTTLDTGTRDAARVLLAST). A helical membrane pass occupies residues 192–212 (LTLLVGIIQLVFGGLQIGFIV). Topologically, residues 213-218 (RYLADP) are cytoplasmic. Residues 219 to 239 (LVGGFTTAAAFQVLVSQLKIV) form a helical membrane-spanning segment. At 240-263 (LNVSTKNYNGVLSIIYTLIEIFQN) the chain is on the extracellular side. The helical transmembrane segment at 264-284 (IGDTNIADFIAGLLTIIVCMA) threads the bilayer. At 285 to 295 (VKELNDRFKHK) the chain is on the cytoplasmic side. The helical transmembrane segment at 296 to 316 (IPVPIPIEVIVTIIATAISYG) threads the bilayer. At 317 to 344 (ANLEANYNAGIVKSIPSGFLPPVLPSVG) the chain is on the extracellular side. A helical transmembrane segment spans residues 345 to 365 (LFSDMLAASFSIAVVAYAIAV). Over 366–384 (SVGKVYATKHDYIIDGNQE) the chain is Cytoplasmic. A helical transmembrane segment spans residues 385–405 (FIAFGISNVFSGFFSCFVATT). Over 406 to 421 (ALSRTAVQESTGGKTQ) the chain is Extracellular. Residues 422–442 (VAGLISAVIVMVAIVALGKLL) form a helical membrane-spanning segment. Residues 443 to 448 (EPLQKS) are Cytoplasmic-facing. The helical transmembrane segment at 449–469 (VLAAVVIANLKGMFMQVCDVP) threads the bilayer. At 470–486 (RLWKQNKTDAVIWVFTC) the chain is on the extracellular side. The chain crosses the membrane as a helical span at residues 487 to 507 (IMSIILGLDLGLLAGLLFGLL). Over 508–780 (TVVLRVQFPS…QDEAMRRLAS (273 aa)) the chain is Cytoplasmic. Residues 535–729 (HYKNLEEPEG…LTVHDAILYL (195 aa)) form the STAS domain.

Belongs to the SLC26A/SulP transporter (TC 2.A.53) family. In terms of tissue distribution, highly expressed in the kidney (at protein level).

The protein resides in the cell membrane. Its subcellular location is the apical cell membrane. The catalysed reaction is chloride(in) = chloride(out). It catalyses the reaction iodide(out) = iodide(in). It carries out the reaction hydrogencarbonate(in) + chloride(out) = hydrogencarbonate(out) + chloride(in). The enzyme catalyses iodide(in) + hydrogencarbonate(out) = iodide(out) + hydrogencarbonate(in). The catalysed reaction is iodide(in) + chloride(out) = iodide(out) + chloride(in). It catalyses the reaction formate(in) + chloride(out) = formate(out) + chloride(in). In terms of biological role, sodium-independent transporter of chloride and iodide. Mediates electroneutral chloride-bicarbonate and chloride-formate exchange with 1:1 stoichiometry. Mediates electroneutral iodide-chloride and iodide-bicarbonate exchange. The protein is Pendrin (Slc26a4) of Rattus norvegicus (Rat).